Here is a 469-residue protein sequence, read N- to C-terminus: RNA-editing ligase 1, mitochondrial (469 aa).

The transit peptide at 1 to 44 directs the protein to the mitochondrion; it reads MQLQRLGAPLLKRLVGGCIRQSTAPIMPCVVVSGSGGFLTPVRT. Residues 59–61, 86–92, asparagine 92, arginine 111, glutamate 159, phenylalanine 209, and 307–309 each bind ATP; these read IEI, EKVHGTN, and KLR. The active-site N6-AMP-lysine intermediate is lysine 87. Positions 450 to 469 are disordered; it reads AAAQSEAIPPLSPAAPTKGE.

The protein belongs to the RNA ligase 2 family. In terms of assembly, component of the RNA editing complex (editosome), a 1600 kDa complex composed of at least 20 proteins. Interacts with terminal uridylyltransferase MEAT1.

The protein localises to the mitochondrion. It carries out the reaction ATP + (ribonucleotide)n-3'-hydroxyl + 5'-phospho-(ribonucleotide)m = (ribonucleotide)n+m + AMP + diphosphate.. Its function is as follows. Essential for RNA editing. RNA editing in kinetoplastid mitochondria inserts and deletes uridylates at multiple sites in pre-mRNAs as directed by guide RNAs. The polypeptide is RNA-editing ligase 1, mitochondrial (REL1) (Trypanosoma brucei brucei (strain 927/4 GUTat10.1)).